Here is a 487-residue protein sequence, read N- to C-terminus: Malonate-semialdehyde dehydrogenase 3 (487 aa).

NAD(+)-binding residues include Phe154, Lys178, Glu181, Arg182, and Ser231. The active-site Nucleophile is the Cys286. Glu386 lines the NAD(+) pocket.

Belongs to the aldehyde dehydrogenase family. IolA subfamily. Homotetramer.

The enzyme catalyses 3-oxopropanoate + NAD(+) + CoA + H2O = hydrogencarbonate + acetyl-CoA + NADH + H(+). The catalysed reaction is 2-methyl-3-oxopropanoate + NAD(+) + CoA + H2O = propanoyl-CoA + hydrogencarbonate + NADH + H(+). The protein operates within polyol metabolism; myo-inositol degradation into acetyl-CoA; acetyl-CoA from myo-inositol: step 7/7. Its function is as follows. Catalyzes the oxidation of malonate semialdehyde (MSA) and methylmalonate semialdehyde (MMSA) into acetyl-CoA and propanoyl-CoA, respectively. Is involved in a myo-inositol catabolic pathway. Bicarbonate, and not CO2, is the end-product of the enzymatic reaction. The sequence is that of Malonate-semialdehyde dehydrogenase 3 from Bacillus cereus (strain ZK / E33L).